The primary structure comprises 414 residues: 2,3-diketo-5-methylthiopentyl-1-phosphate enolase (414 aa).

The Proton acceptor role is filled by lysine 99. Residues lysine 148, 174-177 (KDDE), histidine 265, glycine 338, and 360-361 (GG) each bind substrate. Mg(2+)-binding residues include lysine 174, aspartate 176, and glutamate 177. N6-carboxylysine is present on lysine 174.

The protein belongs to the RuBisCO large chain family. Type IV subfamily. Homodimer. It depends on Mg(2+) as a cofactor.

The enzyme catalyses 5-methylsulfanyl-2,3-dioxopentyl phosphate = 2-hydroxy-5-methylsulfanyl-3-oxopent-1-enyl phosphate. It functions in the pathway amino-acid biosynthesis; L-methionine biosynthesis via salvage pathway; L-methionine from S-methyl-5-thio-alpha-D-ribose 1-phosphate: step 3/6. In terms of biological role, catalyzes the enolization of 2,3-diketo-5-methylthiopentyl-1-phosphate (DK-MTP-1-P) into 2-hydroxy-3-keto-5-methylthiopentenyl-1-phosphate (HK-MTPenyl-1-P). The chain is 2,3-diketo-5-methylthiopentyl-1-phosphate enolase from Bacillus mycoides (strain KBAB4) (Bacillus weihenstephanensis).